Consider the following 141-residue polypeptide: Large ribosomal subunit protein uL16 (141 aa).

This sequence belongs to the universal ribosomal protein uL16 family. Part of the 50S ribosomal subunit.

Its function is as follows. Binds 23S rRNA and is also seen to make contacts with the A and possibly P site tRNAs. The chain is Large ribosomal subunit protein uL16 from Campylobacter jejuni subsp. jejuni serotype O:6 (strain 81116 / NCTC 11828).